A 261-amino-acid polypeptide reads, in one-letter code: 2,3-dihydro-2,3-dihydroxybenzoate dehydrogenase (261 aa).

Position 12–36 (12–36 (FITGAAQGIGEAVARTLASQGAHIA)) interacts with NAD(+). Position 144 (Ser-144) interacts with substrate. Residue Tyr-157 is the Proton acceptor of the active site.

This sequence belongs to the short-chain dehydrogenases/reductases (SDR) family.

The protein localises to the cytoplasm. The catalysed reaction is (2S,3S)-2,3-dihydroxy-2,3-dihydrobenzoate + NAD(+) = 2,3-dihydroxybenzoate + NADH + H(+). The protein operates within siderophore biosynthesis; bacillibactin biosynthesis. The polypeptide is 2,3-dihydro-2,3-dihydroxybenzoate dehydrogenase (dhbA) (Bacillus subtilis (strain 168)).